Reading from the N-terminus, the 93-residue chain is Neurophysin 1 (93 aa).

7 disulfides stabilise this stretch: cysteine 10-cysteine 54, cysteine 13-cysteine 27, cysteine 21-cysteine 44, cysteine 28-cysteine 34, cysteine 61-cysteine 74, cysteine 68-cysteine 86, and cysteine 75-cysteine 80.

It belongs to the vasopressin/oxytocin family.

The protein localises to the secreted. In terms of biological role, neurophysin 1 specifically binds oxytocin. The polypeptide is Neurophysin 1 (Anser anser anser (Western greylag goose)).